A 525-amino-acid chain; its full sequence is GMP synthase [glutamine-hydrolyzing] (525 aa).

A Glutamine amidotransferase type-1 domain is found at 9-207 (RILILDFGSQ…VRDICQCEAL (199 aa)). Catalysis depends on cysteine 86, which acts as the Nucleophile. Active-site residues include histidine 181 and glutamate 183. The GMPS ATP-PPase domain maps to 208 to 400 (WTPAKIIDDA…LGLPYDMLYR (193 aa)). 235-241 (SGGVDSS) serves as a coordination point for ATP.

In terms of assembly, homodimer.

The enzyme catalyses XMP + L-glutamine + ATP + H2O = GMP + L-glutamate + AMP + diphosphate + 2 H(+). It participates in purine metabolism; GMP biosynthesis; GMP from XMP (L-Gln route): step 1/1. In terms of biological role, catalyzes the synthesis of GMP from XMP. The chain is GMP synthase [glutamine-hydrolyzing] from Escherichia coli O17:K52:H18 (strain UMN026 / ExPEC).